The chain runs to 1399 residues: DNA-directed RNA polymerase subunit beta' (1399 aa).

Zn(2+) is bound by residues C71, C73, C86, and C89. Positions 462, 464, and 466 each coordinate Mg(2+). C810, C884, C891, and C894 together coordinate Zn(2+).

The protein belongs to the RNA polymerase beta' chain family. In terms of assembly, the RNAP catalytic core consists of 2 alpha, 1 beta, 1 beta' and 1 omega subunit. When a sigma factor is associated with the core the holoenzyme is formed, which can initiate transcription. Mg(2+) is required as a cofactor. Zn(2+) serves as cofactor.

It catalyses the reaction RNA(n) + a ribonucleoside 5'-triphosphate = RNA(n+1) + diphosphate. In terms of biological role, DNA-dependent RNA polymerase catalyzes the transcription of DNA into RNA using the four ribonucleoside triphosphates as substrates. This is DNA-directed RNA polymerase subunit beta' from Nitrobacter winogradskyi (strain ATCC 25391 / DSM 10237 / CIP 104748 / NCIMB 11846 / Nb-255).